Consider the following 173-residue polypeptide: Large ribosomal subunit protein uL15 (173 aa).

Positions 1–11 (MKLNEIRDNQG) are enriched in basic and acidic residues. The interval 1–50 (MKLNEIRDNQGARKSRVRVGRGIGSGLGKTGGRGQKGQKSRSGVSINGFE) is disordered. Residues 21 to 35 (RGIGSGLGKTGGRGQ) are compositionally biased toward gly residues.

This sequence belongs to the universal ribosomal protein uL15 family. As to quaternary structure, part of the 50S ribosomal subunit.

Binds to the 23S rRNA. The protein is Large ribosomal subunit protein uL15 of Rhizorhabdus wittichii (strain DSM 6014 / CCUG 31198 / JCM 15750 / NBRC 105917 / EY 4224 / RW1) (Sphingomonas wittichii).